Reading from the N-terminus, the 843-residue chain is Complement component C7 (843 aa).

Residues 1 to 22 form the signal peptide; it reads MKVISLFILVGFIGEFQSFSSA. The TSP type-1 1 domain maps to 27 to 80; sequence NCQWDFYAPWSECNGCTKTQTRRRSVAVYGQYGGQPCVGNAFETQSCEPTRGCP. Intrachain disulfides connect cysteine 28/cysteine 63, cysteine 39/cysteine 73, cysteine 42/cysteine 79, cysteine 85/cysteine 96, cysteine 91/cysteine 109, cysteine 103/cysteine 119, and cysteine 128/cysteine 165. Tryptophan 36 carries a C-linked (Man) tryptophan glycan. Residues 83–121 enclose the LDL-receptor class A domain; that stretch reads EGCGERFRCFSGQCISKSLVCNGDSDCDEDSADEDRCED. Over residues 108–120 the composition is skewed to acidic residues; that stretch reads DCDEDSADEDRCE. Positions 108–143 are disordered; that stretch reads DCDEDSADEDRCEDSERRPSCDIDKPPPNIELTGNG. The span at 121 to 132 shows a compositional bias: basic and acidic residues; it reads DSERRPSCDIDK. Residues 124–456 form the MACPF domain; sequence RRPSCDIDKP…EYLDEFDPCH (333 aa). An N-linked (GlcNAc...) asparagine glycan is attached at asparagine 202. The tract at residues 219–240 is disordered; that stretch reads SRKRSFFRSSSSSSRSYTSHTN. Residues 225 to 234 show a composition bias toward low complexity; sequence FRSSSSSSRS. 12 disulfides stabilise this stretch: cysteine 337-cysteine 353, cysteine 433-cysteine 560, cysteine 455-cysteine 505, cysteine 457-cysteine 473, cysteine 460-cysteine 475, cysteine 477-cysteine 486, cysteine 512-cysteine 545, cysteine 523-cysteine 535, cysteine 571-cysteine 613, cysteine 599-cysteine 626, cysteine 631-cysteine 673, and cysteine 659-cysteine 688. One can recognise an EGF-like domain in the interval 457–487; the sequence is CRPCQNGGLATVEGTHCLCHCKPYTFGAACE. The region spanning 500-549 is the TSP type-1 2 domain; that stretch reads DGGWSCWSSWSPCVQGKKTRSRECNNPPPSGGGRSCVGETTESTQCEDEE. Tryptophan 503, tryptophan 506, and tryptophan 509 each carry a C-linked (Man) tryptophan; partial glycan. Residues 516 to 538 form a disordered region; it reads KKTRSRECNNPPPSGGGRSCVGE. CCP stretches follow at residues 545–615 and 616–693; these read CEDE…RCGE and DLRW…QKEN. Sushi domains are found at residues 569–628 and 629–690; these read EFCP…HCQK and IACV…RCVQ. 2 factor I module (FIM) regions span residues 695–770 and 771–843; these read LTQA…ASAE and KACG…AETQ. The O-linked (GalNAc...) threonine glycan is linked to threonine 696. 9 disulfide bridges follow: cysteine 702–cysteine 713, cysteine 715–cysteine 750, cysteine 721–cysteine 743, cysteine 728–cysteine 763, cysteine 773–cysteine 782, cysteine 776–cysteine 789, cysteine 791–cysteine 825, cysteine 797–cysteine 818, and cysteine 805–cysteine 838. N-linked (GlcNAc...) (complex) asparagine glycosylation occurs at asparagine 754.

This sequence belongs to the complement C6/C7/C8/C9 family. In terms of assembly, monomer or dimer; as a C5b-7 complex it can also form multimeric rosettes. Component of the membrane attack complex (MAC), composed of complement C5b, C6, C7, C8A, C8B, C8G and multiple copies of the pore-forming subunit C9. Post-translationally, C-, N- and O-glycosylated. O-glycosylated with core 1 or possibly core 8 glycans.

The protein resides in the secreted. It is found in the target cell membrane. Its activity is regulated as follows. Membrane attack complex (MAC) assembly is inhibited by CD59, thereby protecting self-cells from damage during complement activation. MAC assembly is also inhibited by clusterin (CLU) chaperones that inhibit polymerization of C9. Its function is as follows. Component of the membrane attack complex (MAC), a multiprotein complex activated by the complement cascade, which inserts into a target cell membrane and forms a pore, leading to target cell membrane rupture and cell lysis. The MAC is initiated by proteolytic cleavage of C5 into complement C5b in response to the classical, alternative, lectin and GZMK complement pathways. The complement pathways consist in a cascade of proteins that leads to phagocytosis and breakdown of pathogens and signaling that strengthens the adaptive immune system. C7 serves as a membrane anchor. During MAC assembly, associates with C5b and C6 to form the C5b-7 complex, a key lipophilic precursor of the MAC complex, which associates with the outer leaflet and reduces the energy for membrane bending. In Homo sapiens (Human), this protein is Complement component C7.